The following is a 207-amino-acid chain: Ribosomal RNA small subunit methyltransferase G (207 aa).

Residues Gly-73, Leu-78, 124–125 (VE), and Arg-139 contribute to the S-adenosyl-L-methionine site.

The protein belongs to the methyltransferase superfamily. RNA methyltransferase RsmG family.

Its subcellular location is the cytoplasm. The enzyme catalyses guanosine(527) in 16S rRNA + S-adenosyl-L-methionine = N(7)-methylguanosine(527) in 16S rRNA + S-adenosyl-L-homocysteine. In terms of biological role, specifically methylates the N7 position of guanine in position 527 of 16S rRNA. The chain is Ribosomal RNA small subunit methyltransferase G from Enterobacter sp. (strain 638).